The primary structure comprises 147 residues: Large ribosomal subunit protein bL21 (147 aa).

The tract at residues 115–147 (KSIKVGKPTPKSSSKKEETVKKETKPKSEKSTN) is disordered. The segment covering 128 to 147 (SKKEETVKKETKPKSEKSTN) has biased composition (basic and acidic residues).

Belongs to the bacterial ribosomal protein bL21 family. In terms of assembly, part of the 50S ribosomal subunit. Contacts protein L20.

Its function is as follows. This protein binds to 23S rRNA in the presence of protein L20. In Prochlorococcus marinus (strain MIT 9215), this protein is Large ribosomal subunit protein bL21.